Consider the following 107-residue polypeptide: Phosphoribosyl-ATP pyrophosphatase (107 aa).

Belongs to the PRA-PH family.

The protein localises to the cytoplasm. It catalyses the reaction 1-(5-phospho-beta-D-ribosyl)-ATP + H2O = 1-(5-phospho-beta-D-ribosyl)-5'-AMP + diphosphate + H(+). It participates in amino-acid biosynthesis; L-histidine biosynthesis; L-histidine from 5-phospho-alpha-D-ribose 1-diphosphate: step 2/9. The polypeptide is Phosphoribosyl-ATP pyrophosphatase (Bacillus cereus (strain ATCC 14579 / DSM 31 / CCUG 7414 / JCM 2152 / NBRC 15305 / NCIMB 9373 / NCTC 2599 / NRRL B-3711)).